A 517-amino-acid chain; its full sequence is Salicyloyl-CoA 5-hydroxylase (517 aa).

The protein belongs to the aromatic-ring hydroxylase family. KMO subfamily.

The enzyme catalyses 2-hydroxybenzoyl-CoA + NADH + O2 + H(+) = 2,5-dihydroxybenzoyl-CoA + NAD(+) + H2O. Involved in the degradation of salicylate via a pathway involving coenzyme A derivative. Catalyzes the aromatic hydroxylation of salicylyl-CoA to yield gentisyl-CoA. This Streptomyces sp protein is Salicyloyl-CoA 5-hydroxylase.